Here is a 62-residue protein sequence, read N- to C-terminus: Large ribosomal subunit protein eL37 (62 aa).

C20, C23, C35, and C38 together coordinate Zn(2+). The segment at 20-38 (CRRCGRRAYHVRKGYCAAC) adopts a C4-type zinc-finger fold.

It belongs to the eukaryotic ribosomal protein eL37 family. The cofactor is Zn(2+).

Its function is as follows. Binds to the 23S rRNA. This Methanopyrus kandleri (strain AV19 / DSM 6324 / JCM 9639 / NBRC 100938) protein is Large ribosomal subunit protein eL37.